We begin with the raw amino-acid sequence, 382 residues long: MQMIKKMALSETFPGILLIFFTFLALLCKNSSLSVIYTDFFHANFTVGFVHFQISKSLDLWINDGLIAIFFLCIGLELKYEILRGQLKNIRAVSLPIFGALGGMITPALIFAAINYSYDFAMKGWAIPTATDIAFAVGILMLLGNKIPTSLKLFLLSLAIFDDLGAIVIIALFYTDQLSALAIIICLFCIFALLLLNYYHITHLSLYVLVGVVLWIAMLKSGVHATLAGVIISLFIPLDTKNKKPYLHEVLKDLNPWVVYFILPLFAFANAGIDIRDMHLGSVFSPVSLGIILGLFLGKQLGVFIFCFIAIKLKLAKLPENIKYGKFYGICILTGIGFTMSLFIDGLAYKNSDIFEHADKLAILIASFLSAIVGFIYLKIVK.

11 helical membrane passes run M7–L27, L58–L78, S94–I114, G124–G144, L153–F173, L178–Y198, Y199–L219, N255–I275, I291–I311, F327–L347, and L361–V381.

The protein belongs to the NhaA Na(+)/H(+) (TC 2.A.33) antiporter family.

It is found in the cell inner membrane. It catalyses the reaction Na(+)(in) + 2 H(+)(out) = Na(+)(out) + 2 H(+)(in). Functionally, na(+)/H(+) antiporter that extrudes sodium in exchange for external protons. This Campylobacter jejuni subsp. doylei (strain ATCC BAA-1458 / RM4099 / 269.97) protein is Na(+)/H(+) antiporter NhaA 2.